Consider the following 1266-residue polypeptide: SUMO-interacting motif-containing protein 1 (1266 aa).

Positions 1–35 (MEDFIVISDDSGSESSAGTRSGRARRLRRALSRTP) are disordered. Residues 22–31 (GRARRLRRAL) show a composition bias toward basic residues. The short motif at 45 to 49 (FIDLT) is the SUMO interaction motif 1 (SIM); mediates the binding to polysumoylated substrates element. The short motif at 64–68 (VIDLT) is the SUMO interaction motif 2 (SIM); mediates the binding to polysumoylated substrates element. 2 stretches are compositionally biased toward low complexity: residues 183–197 (SPFSSTSNNSSSSSN) and 532–553 (SSGGVTQSSGGVIQSSSGVPQS). Disordered stretches follow at residues 183–206 (SPFSSTSNNSSSSSNQRTSLPCPQ), 532–732 (SSGG…SGDV), 756–812 (NRHS…PGSA), and 1024–1052 (LTPPQDETQTSPGPGVLKTSSDHLSPQPN). Residues 560 to 571 (SPGSVSQSSGDV) show a composition bias toward polar residues. Positions 764-777 (SAPSSPSCSANPLS) are enriched in low complexity. The interval 779 to 1266 (QSEFSSEKRP…NPDTEPASER (488 aa)) is interaction with SLF2. Residues 857-1266 (SKGQKLEPIP…NPDTEPASER (410 aa)) are required for inhibition of CAPN3 protease activity. The segment at 865–1200 (IPHRRLRMVT…IDRKDLIIKR (336 aa)) is NSE5-like domain.

In terms of assembly, forms a heterodimer with SLF2. Interacts (via SIM domains) with SUMO1 and SUMO2. Interacts with CAPN3 and CTBP1. Interacts with SMC6 and ZNF451.

The protein resides in the nucleus. Its subcellular location is the PML body. Its function is as follows. Inhibits the protease activity of CAPN3. May play a role in SMC5-SMC6 complex recruitment for viral restriction. Forms a complex with SLF2 and this complex is required to recruit SMC5-SMC6 complex to PML nuclear bodies and sites of viral replication. The polypeptide is SUMO-interacting motif-containing protein 1 (Simc1) (Rattus norvegicus (Rat)).